The sequence spans 394 residues: Elongation factor Tu-A (394 aa).

The region spanning 10 to 204 (KPHVNVGTIG…HLDTYIPEPQ (195 aa)) is the tr-type G domain. Residues 19–26 (GHVDHGKT) form a G1 region. GTP is bound at residue 19–26 (GHVDHGKT). Thr26 contacts Mg(2+). Positions 60–64 (GITIN) are G2. The interval 81–84 (DCPG) is G3. Residues 81-85 (DCPGH) and 136-139 (NKCD) contribute to the GTP site. The segment at 136–139 (NKCD) is G4. Residues 174–176 (SAL) form a G5 region.

It belongs to the TRAFAC class translation factor GTPase superfamily. Classic translation factor GTPase family. EF-Tu/EF-1A subfamily. Monomer.

Its subcellular location is the cytoplasm. It carries out the reaction GTP + H2O = GDP + phosphate + H(+). GTP hydrolase that promotes the GTP-dependent binding of aminoacyl-tRNA to the A-site of ribosomes during protein biosynthesis. This Pasteurella multocida (strain Pm70) protein is Elongation factor Tu-A.